Reading from the N-terminus, the 287-residue chain is Small ribosomal subunit biogenesis GTPase RsgA (287 aa).

In terms of domain architecture, CP-type G spans 61 to 218 (SSELIRPTVA…LVDTPGFTTL (158 aa)). GTP is bound by residues 110-113 (NKED) and 161-169 (GPSGAGKST). Zn(2+)-binding residues include Cys-242, Cys-247, His-249, and Cys-255.

Belongs to the TRAFAC class YlqF/YawG GTPase family. RsgA subfamily. In terms of assembly, monomer. Associates with 30S ribosomal subunit, binds 16S rRNA. Zn(2+) serves as cofactor.

It localises to the cytoplasm. Its function is as follows. One of several proteins that assist in the late maturation steps of the functional core of the 30S ribosomal subunit. Helps release RbfA from mature subunits. May play a role in the assembly of ribosomal proteins into the subunit. Circularly permuted GTPase that catalyzes slow GTP hydrolysis, GTPase activity is stimulated by the 30S ribosomal subunit. The sequence is that of Small ribosomal subunit biogenesis GTPase RsgA from Clostridium perfringens (strain ATCC 13124 / DSM 756 / JCM 1290 / NCIMB 6125 / NCTC 8237 / Type A).